Here is a 230-residue protein sequence, read N- to C-terminus: Large ribosomal subunit protein uL1c (230 aa).

The protein belongs to the universal ribosomal protein uL1 family. In terms of assembly, part of the 50S ribosomal subunit.

The protein localises to the plastid. It localises to the chloroplast. In terms of biological role, binds directly to 23S rRNA. Might be involved in E site tRNA release (Potential). This is Large ribosomal subunit protein uL1c (rpl1) from Phaeodactylum tricornutum (strain CCAP 1055/1).